A 576-amino-acid polypeptide reads, in one-letter code: Deformed epidermal autoregulatory factor 1 (576 aa).

Disordered stretches follow at residues 52–76 (VTSSSNDNSGSGGASGGTSGAGGGN), 189–215 (AGGASGVGGGGGGTGGGSSGWSENPST), and 309–362 (ESAS…SGSG). 2 stretches are compositionally biased toward gly residues: residues 61 to 76 (GSGGASGGTSGAGGGN) and 191 to 207 (GASGVGGGGGGTGGGSS). In terms of domain architecture, SAND spans 210–291 (SENPSTQHNE…QSLIDEGTLT (82 aa)). The short motif at 324-340 (RKRNQTDLDMESGPKRK) is the Nuclear localization signal element. Residues 345–362 (HSNNNNSNTNNNNTSGSG) show a composition bias toward low complexity. The Zn(2+) site is built by cysteine 521, cysteine 524, cysteine 532, cysteine 535, cysteine 541, cysteine 545, histidine 553, and cysteine 557. An MYND-type zinc finger spans residues 521–557 (CANCNREALAECSLCRKTPYCSEFCQRKDWNAHQVEC).

It localises to the nucleus. In terms of biological role, transcription factor that binds the homeotic Deformed (Dfd) response element. High affinity binding sites contain at least 1 TTCG motif surrounded by additional TCG sequences. May be involved in the selective action of Dfd on these sites without binding directly to the Dfd protein. Requirement of DEAF1 activity may be a common feature of enhancers targeted by Dfd. The sequence is that of Deformed epidermal autoregulatory factor 1 (Deaf1) from Drosophila melanogaster (Fruit fly).